The primary structure comprises 180 residues: Putative adenylate kinase (180 aa).

Gly-10, Gly-12, Lys-13, Thr-14, and Thr-15 together coordinate ATP. The tract at residues 30-50 is NMP; sequence NLRDFALEKGCGREVDGEVEV. The segment at 99 to 109 is LID; that stretch reads ERGYSKEKIGE. Residues Arg-100 and Lys-138 each contribute to the ATP site.

This sequence belongs to the adenylate kinase family. AK6 subfamily. Interacts with uS11. Not a structural component of 40S pre-ribosomes, but transiently interacts with them by binding to uS11.

The enzyme catalyses AMP + ATP = 2 ADP. It carries out the reaction ATP + H2O = ADP + phosphate + H(+). Its function is as follows. Broad-specificity nucleoside monophosphate (NMP) kinase that catalyzes the reversible transfer of the terminal phosphate group between nucleoside triphosphates and monophosphates. Also has ATPase activity. Involved in the late maturation steps of the 30S ribosomal particles, specifically 16S rRNA maturation. While NMP activity is not required for ribosome maturation, ATPase activity is. Associates transiently with small ribosomal subunit protein uS11. ATP hydrolysis breaks the interaction with uS11. May temporarily remove uS11 from the ribosome to enable a conformational change of the ribosomal RNA that is needed for the final maturation step of the small ribosomal subunit. The sequence is that of Putative adenylate kinase from Pyrococcus abyssi (strain GE5 / Orsay).